The following is a 1807-amino-acid chain: Atrochrysone carboxylic acid synthase Agnpks1 (1807 aa).

Residues 41 to 173 (LFRELHNHSK…ITGAQVIRQA (133 aa)) form an N-terminal acylcarrier protein transacylase domain (SAT) region. Positions 411–845 (QSKIAIVGMS…GGNTTILLEE (435 aa)) constitute a Ketosynthase family 3 (KS3) domain. Active-site for beta-ketoacyl synthase activity residues include cysteine 584, histidine 720, and histidine 763. The malonyl-CoA:ACP transacylase (MAT) domain stretch occupies residues 946-1265 (FTFTGQGASY…SLAALHCAGV (320 aa)). Residues 1334–1653 (TSTVHQIIQE…RILLSRFFSA (320 aa)) form a product template (PT) domain region. The segment at 1338-1473 (HQIIQESIDG…ATLIYGDPSE (136 aa)) is N-terminal hotdog fold. Residues 1338–1648 (HQIIQESIDG…FRRYPRILLS (311 aa)) form the PKS/mFAS DH domain. The active-site Proton acceptor; for dehydratase activity is the histidine 1370. The segment at 1500–1648 (VANRFNHQMA…FRRYPRILLS (149 aa)) is C-terminal hotdog fold. The active-site Proton donor; for dehydratase activity is the aspartate 1559. Positions 1732–1806 (DTTTAKAIQI…DLRSWLEEYY (75 aa)) constitute a Carrier domain. Serine 1766 is subject to O-(pantetheine 4'-phosphoryl)serine.

The enzyme catalyses holo-[ACP] + 8 malonyl-CoA + 8 H(+) = atrochrysone carboxyl-[ACP] + 8 CO2 + 8 CoA + 2 H2O. It functions in the pathway secondary metabolite biosynthesis. In terms of biological role, non-reducing polyketide synthase; part of the gene cluster that mediates the biosynthesis of agnestins, dihydroxy-xanthone metabolites. The pathway begins with the assembly and cyclization of atrochrysone thioester by the non-reducing polyketide synthase Agnpks1. The atrochrysone carboxyl ACP thioesterase AgnL7 then breaks the thioester bond and releases the atrochrysone carboxylic acid as the first enzyme-free intermediate. The decarboxylase AgnL1 then catalyzes the concerted decarboxylation-elimination required to convert atochrysone carboxylic acid into emodin anthrone, which is further oxidized to emodin by the anthrone oxygenase AgnL2. Emodin then undergoes reduction catalyzed by the oxidoreductase AgnL4 to yield the dihydroquinone tautomer which is the substrate for reduction by the short chain dehydrogenase AgnL6 reduction to produce hydroxyketone, followed by AgnL8 dehydration and likely spontaneous autoxidation to chrysophanol. Baeyer-Villiger oxidation by the oxidase AgnL3 leads to monodictyphenone via cleavage of the C-10/C-10a bond of chrysophanol. Alternative cleavage at the C-4a/C-10 bond of chrysophanol also leads to the formation some cephalone F. Further conversion to agnestins A and B, requires reduction to dihydro-monodictyphenone, oxidation to agnestin C probably via an epoxide, and rearrangement to either agnestin A or agnestin B directly, although agnestin A or agnestin B can also interconvert. Within the cluster, AgnR1 is the only unassigned oxidoreductase present which could be involved in this conversion. However, AgnR1 seems not to be involved in this step, and thus genes involved in the proposed oxidation/reduction may be located elsewhere on the genome. Further agnestin A derivatives are probably formed by spontaneous decarboxylations, dehydrations and methanolysis reactions. This is Atrochrysone carboxylic acid synthase Agnpks1 from Paecilomyces divaricatus (Penicillium divaricatum).